The sequence spans 146 residues: Ribonuclease H (146 aa).

The RNase H type-1 domain maps to 1 to 143 (MKEIIIYTDG…CDQLARNAIK (143 aa)). Residues Asp9, Glu47, Asp70, and Asp135 each coordinate Mg(2+).

This sequence belongs to the RNase H family. In terms of assembly, monomer. Mg(2+) serves as cofactor.

The protein localises to the cytoplasm. It catalyses the reaction Endonucleolytic cleavage to 5'-phosphomonoester.. Its function is as follows. Endonuclease that specifically degrades the RNA of RNA-DNA hybrids. The chain is Ribonuclease H from Syntrophomonas wolfei subsp. wolfei (strain DSM 2245B / Goettingen).